The primary structure comprises 96 residues: Co-chaperonin GroES 1 (96 aa).

Belongs to the GroES chaperonin family. As to quaternary structure, heptamer of 7 subunits arranged in a ring. Interacts with the chaperonin GroEL.

Its subcellular location is the cytoplasm. Functionally, together with the chaperonin GroEL, plays an essential role in assisting protein folding. The GroEL-GroES system forms a nano-cage that allows encapsulation of the non-native substrate proteins and provides a physical environment optimized to promote and accelerate protein folding. GroES binds to the apical surface of the GroEL ring, thereby capping the opening of the GroEL channel. In Vibrio cholerae serotype O1 (strain ATCC 39315 / El Tor Inaba N16961), this protein is Co-chaperonin GroES 1.